The sequence spans 1299 residues: DNA-directed RNA polymerase subunit beta' (1299 aa).

Cysteine 60, cysteine 62, cysteine 75, and cysteine 78 together coordinate Zn(2+). Residues 385-405 (GRRGRPVTGPGNRPLKSLSDM) form a disordered region. Positions 535, 537, and 539 each coordinate Mg(2+). Zn(2+) contacts are provided by cysteine 886, cysteine 962, cysteine 969, and cysteine 972.

The protein belongs to the RNA polymerase beta' chain family. The RNAP catalytic core consists of 2 alpha, 1 beta, 1 beta' and 1 omega subunit. When a sigma factor is associated with the core the holoenzyme is formed, which can initiate transcription. Mg(2+) serves as cofactor. The cofactor is Zn(2+).

The enzyme catalyses RNA(n) + a ribonucleoside 5'-triphosphate = RNA(n+1) + diphosphate. Its function is as follows. DNA-dependent RNA polymerase catalyzes the transcription of DNA into RNA using the four ribonucleoside triphosphates as substrates. This chain is DNA-directed RNA polymerase subunit beta', found in Streptomyces avermitilis (strain ATCC 31267 / DSM 46492 / JCM 5070 / NBRC 14893 / NCIMB 12804 / NRRL 8165 / MA-4680).